Reading from the N-terminus, the 905-residue chain is Lateral signaling target protein 2 homolog (905 aa).

K87 is covalently cross-linked (Glycyl lysine isopeptide (Lys-Gly) (interchain with G-Cter in ubiquitin)). A Phosphoserine modification is found at S334. The interval 354 to 441 (DEMSSLLSPP…RGQDGQSGEV (88 aa)) is disordered. Polar residues-rich tracts occupy residues 358–367 (SLLSPPSACQ) and 418–437 (PGNT…QDGQ). T512 carries the phosphothreonine modification. 2 disordered regions span residues 516 to 552 (NPKS…DNSH) and 589 to 691 (PGSV…RGDV). 2 stretches are compositionally biased toward basic and acidic residues: residues 542–552 (PRAEGTGDNSH) and 605–615 (GGDKEPERIDE). Over residues 647–656 (SGPQVDTASR) the composition is skewed to polar residues. The span at 659-678 (GEGEVKGQPEPEARKQDPEK) shows a compositional bias: basic and acidic residues. The FYVE-type zinc-finger motif lies at 835–895 (DEACGFCTSC…VCTHCYMFHV (61 aa)). 7 residues coordinate Zn(2+): C841, C844, C857, C860, C865, C868, and C887. Position 888 is a phosphothreonine; by MAP2K (T888). Position 890 (C890) interacts with Zn(2+).

This sequence belongs to the lst-2 family. In terms of assembly, interacts with TRIM3. Post-translationally, monoubiquitination at Lys-87 prevents binding to phosphatidylinositol 3-phosphate (PI3P) and localization to early endosome membranes. As to expression, enriched in brain (at protein level).

The protein resides in the cytoplasm. Its subcellular location is the cytosol. It is found in the early endosome membrane. Its function is as follows. Negative regulator of epidermal growth factor receptor (EGFR) signaling. Acts by promoting EGFR degradation in endosomes when not monoubiquitinated. The protein is Lateral signaling target protein 2 homolog (Zfyve28) of Mus musculus (Mouse).